A 718-amino-acid chain; its full sequence is Polyribonucleotide nucleotidyltransferase (718 aa).

2 residues coordinate Mg(2+): D493 and D499. The region spanning 560-619 (PRMITIKINPEKIRDVIGKGGSVIRALTEETGTTIDISDDGVVTIASTSSEGMAEAKKRI) is the KH domain. An S1 motif domain is found at 629–697 (GQVYEGTVLK…EKGRVRLSAK (69 aa)).

Belongs to the polyribonucleotide nucleotidyltransferase family. Mg(2+) serves as cofactor.

The protein localises to the cytoplasm. The catalysed reaction is RNA(n+1) + phosphate = RNA(n) + a ribonucleoside 5'-diphosphate. Involved in mRNA degradation. Catalyzes the phosphorolysis of single-stranded polyribonucleotides processively in the 3'- to 5'-direction. The sequence is that of Polyribonucleotide nucleotidyltransferase from Paraburkholderia phytofirmans (strain DSM 17436 / LMG 22146 / PsJN) (Burkholderia phytofirmans).